Consider the following 227-residue polypeptide: tRNA pseudouridine synthase B (227 aa).

Asp-42 serves as the catalytic Nucleophile.

This sequence belongs to the pseudouridine synthase TruB family. Type 1 subfamily.

The catalysed reaction is uridine(55) in tRNA = pseudouridine(55) in tRNA. In terms of biological role, responsible for synthesis of pseudouridine from uracil-55 in the psi GC loop of transfer RNAs. The polypeptide is tRNA pseudouridine synthase B (Ureaplasma parvum serovar 3 (strain ATCC 27815 / 27 / NCTC 11736)).